A 192-amino-acid polypeptide reads, in one-letter code: GTP-binding protein RHO2 (192 aa).

14-21 (GDGACGKT) lines the GTP pocket. An Effector region motif is present at residues 36–44 (YHPTVFENY). GTP is bound by residues 61–65 (DTAGQ) and 119–122 (LKKD). The S-palmitoyl cysteine moiety is linked to residue C188. C189 bears the Cysteine methyl ester mark. Residue C189 is the site of S-geranylgeranyl cysteine attachment. Positions 190–192 (IIL) are cleaved as a propeptide — removed in mature form.

Belongs to the small GTPase superfamily. Rho family. As to quaternary structure, interacts with BEM4.

Its subcellular location is the cell membrane. It catalyses the reaction GTP + H2O = GDP + phosphate + H(+). In Saccharomyces cerevisiae (strain ATCC 204508 / S288c) (Baker's yeast), this protein is GTP-binding protein RHO2 (RHO2).